We begin with the raw amino-acid sequence, 792 residues long: Xaa-Pro dipeptidyl-peptidase (792 aa).

Catalysis depends on charge relay system residues serine 363, aspartate 482, and histidine 513.

This sequence belongs to the peptidase S15 family. Homodimer.

It localises to the cytoplasm. It catalyses the reaction Hydrolyzes Xaa-Pro-|- bonds to release unblocked, N-terminal dipeptides from substrates including Ala-Pro-|-p-nitroanilide and (sequentially) Tyr-Pro-|-Phe-Pro-|-Gly-Pro-|-Ile.. In terms of biological role, removes N-terminal dipeptides sequentially from polypeptides having unsubstituted N-termini provided that the penultimate residue is proline. This Lactobacillus delbrueckii subsp. bulgaricus (strain ATCC BAA-365 / Lb-18) protein is Xaa-Pro dipeptidyl-peptidase.